A 453-amino-acid chain; its full sequence is Glutamyl-tRNA reductase (453 aa).

Residues 54–57, Ser113, 118–120, and Gln124 each bind substrate; these read TCNR and EAQ. Residue Cys55 is the Nucleophile of the active site. 193–198 provides a ligand contact to NADP(+); it reads GGGEVS.

The protein belongs to the glutamyl-tRNA reductase family. Homodimer.

The enzyme catalyses (S)-4-amino-5-oxopentanoate + tRNA(Glu) + NADP(+) = L-glutamyl-tRNA(Glu) + NADPH + H(+). It functions in the pathway porphyrin-containing compound metabolism; protoporphyrin-IX biosynthesis; 5-aminolevulinate from L-glutamyl-tRNA(Glu): step 1/2. The protein operates within porphyrin-containing compound metabolism; chlorophyll biosynthesis. Functionally, catalyzes the NADPH-dependent reduction of glutamyl-tRNA(Glu) to glutamate 1-semialdehyde (GSA). The chain is Glutamyl-tRNA reductase from Chloroflexus aggregans (strain MD-66 / DSM 9485).